The sequence spans 167 residues: NADH-quinone oxidoreductase subunit B 2 (167 aa).

[4Fe-4S] cluster-binding residues include Cys-38, Cys-39, Cys-103, and Cys-132.

Belongs to the complex I 20 kDa subunit family. In terms of assembly, NDH-1 is composed of 14 different subunits. Subunits NuoB, C, D, E, F, and G constitute the peripheral sector of the complex. [4Fe-4S] cluster is required as a cofactor.

Its subcellular location is the cell inner membrane. The enzyme catalyses a quinone + NADH + 5 H(+)(in) = a quinol + NAD(+) + 4 H(+)(out). In terms of biological role, NDH-1 shuttles electrons from NADH, via FMN and iron-sulfur (Fe-S) centers, to quinones in the respiratory chain. The immediate electron acceptor for the enzyme in this species is believed to be ubiquinone. Couples the redox reaction to proton translocation (for every two electrons transferred, four hydrogen ions are translocated across the cytoplasmic membrane), and thus conserves the redox energy in a proton gradient. The chain is NADH-quinone oxidoreductase subunit B 2 from Rhizobium meliloti (strain 1021) (Ensifer meliloti).